We begin with the raw amino-acid sequence, 162 residues long: Caveolin-2 (162 aa).

Over 1 to 86 (MGLETEKADV…FEISKYIIYK (86 aa)) the chain is Cytoplasmic. Phosphotyrosine; by SRC is present on Y19. Phosphoserine is present on residues S20 and S23. At Y27 the chain carries Phosphotyrosine; by SRC. Residues 87–107 (FLTVFLAIPLAFAAGILFATL) constitute an intramembrane region (helical). The Cytoplasmic portion of the chain corresponds to 108 to 162 (SCLHIWITMPFVKTCLMVLPSVQTIWKSVTDVAIAPLCTSVGRSFSSVSLQLSHD).

It belongs to the caveolin family. As to quaternary structure, monomer or homodimer. Interacts with CAV1; the interaction forms a stable heterooligomeric complex that is required for targeting to lipid rafts and for caveolae formation. Tyrosine phosphorylated forms do not form heterooligomers with the Tyr-19-phosphorylated form existing as a monomer or dimer, and the Tyr-27-form as a monomer only. Interacts (tyrosine phosphorylated form) with the SH2 domain-containing proteins, RASA1, NCK1 and SRC. Interacts (tyrosine phosphorylated form) with INSR, the interaction (Tyr-27-phosphorylated form) is increased on insulin stimulation. Interacts (Tyr-19 phosphorylated form) with MAPK1 (phosphorylated form); the interaction, promoted by insulin, leads to nuclear location and MAPK1 activation. Interacts with STAT3; the interaction is increased on insulin-induced tyrosine phosphorylation leading to STAT activation. In terms of processing, phosphorylated on serine and tyrosine residues. CAV1 promotes phosphorylation on Ser-23 which then targets the complex to the plasma membrane, lipid rafts and caveolae. Phosphorylation on both Tyr-19 and Tyr-27 is required for insulin-induced 'Ser-727' phosphorylation of STAT3 and its activation. Phosphorylation on Tyr-19 is required for insulin-induced phosphorylation of MAPK1 and DNA binding of STAT3. Tyrosine phosphorylation is induced by both EGF and insulin.

It localises to the nucleus. It is found in the cytoplasm. The protein localises to the golgi apparatus membrane. The protein resides in the cell membrane. Its subcellular location is the membrane. It localises to the caveola. Functionally, may act as a scaffolding protein within caveolar membranes. Interacts directly with G-protein alpha subunits and can functionally regulate their activity. Acts as an accessory protein in conjunction with CAV1 in targeting to lipid rafts and driving caveolae formation. Positive regulator of cellular mitogenesis of the MAPK signaling pathway. Required for the insulin-stimulated nuclear translocation and activation of MAPK1 and STAT3, and the subsequent regulation of cell cycle progression. The polypeptide is Caveolin-2 (CAV2) (Dasypus novemcinctus (Nine-banded armadillo)).